The following is a 330-amino-acid chain: Malate dehydrogenase (330 aa).

Residue 12 to 18 coordinates NAD(+); the sequence is GAAGQIG. Positions 93 and 99 each coordinate substrate. NAD(+)-binding positions include asparagine 106, glutamine 113, and 130–132; that span reads VGN. Residues asparagine 132 and arginine 166 each coordinate substrate. The Proton acceptor role is filled by histidine 191.

Belongs to the LDH/MDH superfamily. MDH type 2 family.

The catalysed reaction is (S)-malate + NAD(+) = oxaloacetate + NADH + H(+). Catalyzes the reversible oxidation of malate to oxaloacetate. This Azoarcus sp. (strain BH72) protein is Malate dehydrogenase.